Consider the following 250-residue polypeptide: Triosephosphate isomerase (250 aa).

9-11 (NWK) contacts substrate. The active-site Electrophile is the His-95. Residue Glu-167 is the Proton acceptor of the active site. Substrate-binding positions include Gly-173, Ser-213, and 234–235 (GG).

The protein belongs to the triosephosphate isomerase family. As to quaternary structure, homodimer.

The protein resides in the cytoplasm. It catalyses the reaction D-glyceraldehyde 3-phosphate = dihydroxyacetone phosphate. The protein operates within carbohydrate biosynthesis; gluconeogenesis. It participates in carbohydrate degradation; glycolysis; D-glyceraldehyde 3-phosphate from glycerone phosphate: step 1/1. Functionally, involved in the gluconeogenesis. Catalyzes stereospecifically the conversion of dihydroxyacetone phosphate (DHAP) to D-glyceraldehyde-3-phosphate (G3P). The chain is Triosephosphate isomerase from Herpetosiphon aurantiacus (strain ATCC 23779 / DSM 785 / 114-95).